We begin with the raw amino-acid sequence, 270 residues long: Indole-3-glycerol phosphate synthase (270 aa).

Belongs to the TrpC family.

It catalyses the reaction 1-(2-carboxyphenylamino)-1-deoxy-D-ribulose 5-phosphate + H(+) = (1S,2R)-1-C-(indol-3-yl)glycerol 3-phosphate + CO2 + H2O. It functions in the pathway amino-acid biosynthesis; L-tryptophan biosynthesis; L-tryptophan from chorismate: step 4/5. This chain is Indole-3-glycerol phosphate synthase, found in Beutenbergia cavernae (strain ATCC BAA-8 / DSM 12333 / CCUG 43141 / JCM 11478 / NBRC 16432 / NCIMB 13614 / HKI 0122).